Here is a 367-residue protein sequence, read N- to C-terminus: 2-aminoethylphosphonate--pyruvate transaminase (367 aa).

Residue lysine 194 is modified to N6-(pyridoxal phosphate)lysine.

It belongs to the class-V pyridoxal-phosphate-dependent aminotransferase family. PhnW subfamily. Homodimer. It depends on pyridoxal 5'-phosphate as a cofactor.

It carries out the reaction (2-aminoethyl)phosphonate + pyruvate = phosphonoacetaldehyde + L-alanine. Involved in phosphonate degradation. The protein is 2-aminoethylphosphonate--pyruvate transaminase of Salmonella dublin (strain CT_02021853).